We begin with the raw amino-acid sequence, 125 residues long: Interleukin-6 (125 aa).

Cysteines 16 and 26 form a disulfide.

This sequence belongs to the IL-6 superfamily. In terms of assembly, component of a hexamer of two molecules each of IL6, IL6R and IL6ST; first binds to IL6R to associate with the signaling subunit IL6ST. Interacts with IL6R (via the N-terminal ectodomain); this interaction may be affected by IL6R-binding with SORL1, hence decreasing IL6 cis signaling. Interacts with SORL1 (via the N-terminal ectodomain); this interaction leads to IL6 internalization and lysosomal degradation. May form a trimeric complex with the soluble SORL1 ectodomain and soluble IL6R receptor; this interaction might stabilize circulating IL6, hence promoting IL6 trans signaling.

Its subcellular location is the secreted. In terms of biological role, cytokine with a wide variety of biological functions in immunity, tissue regeneration, and metabolism. Binds to IL6R, then the complex associates to the signaling subunit IL6ST/gp130 to trigger the intracellular IL6-signaling pathway. The interaction with the membrane-bound IL6R and IL6ST stimulates 'classic signaling', whereas the binding of IL6 and soluble IL6R to IL6ST stimulates 'trans-signaling'. Alternatively, 'cluster signaling' occurs when membrane-bound IL6:IL6R complexes on transmitter cells activate IL6ST receptors on neighboring receiver cells. Its function is as follows. IL6 is a potent inducer of the acute phase response. Rapid production of IL6 contributes to host defense during infection and tissue injury, but excessive IL6 synthesis is involved in disease pathology. In the innate immune response, is synthesized by myeloid cells, such as macrophages and dendritic cells, upon recognition of pathogens through toll-like receptors (TLRs) at the site of infection or tissue injury. In the adaptive immune response, is required for the differentiation of B cells into immunoglobulin-secreting cells. Plays a major role in the differentiation of CD4(+) T cell subsets. Essential factor for the development of T follicular helper (Tfh) cells that are required for the induction of germinal-center formation. Required to drive naive CD4(+) T cells to the Th17 lineage. Also required for proliferation of myeloma cells and the survival of plasmablast cells. Acts as an essential factor in bone homeostasis and on vessels directly or indirectly by induction of VEGF, resulting in increased angiogenesis activity and vascular permeability. Induces, through 'trans-signaling' and synergistically with IL1B and TNF, the production of VEGF. Involved in metabolic controls, is discharged into the bloodstream after muscle contraction increasing lipolysis and improving insulin resistance. 'Trans-signaling' in central nervous system also regulates energy and glucose homeostasis. Mediates, through GLP-1, crosstalk between insulin-sensitive tissues, intestinal L cells and pancreatic islets to adapt to changes in insulin demand. Also acts as a myokine. Plays a protective role during liver injury, being required for maintenance of tissue regeneration. Also has a pivotal role in iron metabolism by regulating HAMP/hepcidin expression upon inflammation or bacterial infection. Through activation of IL6ST-YAP-NOTCH pathway, induces inflammation-induced epithelial regeneration. In Neovison vison (American mink), this protein is Interleukin-6 (IL6).